We begin with the raw amino-acid sequence, 425 residues long: UDP-N-acetylglucosamine 1-carboxyvinyltransferase (425 aa).

22–23 serves as a coordination point for phosphoenolpyruvate; it reads KN. Arg91 is a binding site for UDP-N-acetyl-alpha-D-glucosamine. The active-site Proton donor is Cys115. 2-(S-cysteinyl)pyruvic acid O-phosphothioketal is present on Cys115. UDP-N-acetyl-alpha-D-glucosamine-binding positions include 120–124, Asp309, and Ile331; that span reads RPVDL.

This sequence belongs to the EPSP synthase family. MurA subfamily.

The protein resides in the cytoplasm. The catalysed reaction is phosphoenolpyruvate + UDP-N-acetyl-alpha-D-glucosamine = UDP-N-acetyl-3-O-(1-carboxyvinyl)-alpha-D-glucosamine + phosphate. The protein operates within cell wall biogenesis; peptidoglycan biosynthesis. In terms of biological role, cell wall formation. Adds enolpyruvyl to UDP-N-acetylglucosamine. This Akkermansia muciniphila (strain ATCC BAA-835 / DSM 22959 / JCM 33894 / BCRC 81048 / CCUG 64013 / CIP 107961 / Muc) protein is UDP-N-acetylglucosamine 1-carboxyvinyltransferase.